Reading from the N-terminus, the 103-residue chain is MYAVIKHGGKQYKVSVGDVLELDRIEGAEPKSSIELNEVLLVKGDDTKIGAPTVEGAKVVAEVINNARGKKVIIFKKRRRKDSRKKRGFRRDFTRVVIKEIVA.

This sequence belongs to the bacterial ribosomal protein bL21 family. In terms of assembly, part of the 50S ribosomal subunit. Contacts protein L20.

Functionally, this protein binds to 23S rRNA in the presence of protein L20. In Nautilia profundicola (strain ATCC BAA-1463 / DSM 18972 / AmH), this protein is Large ribosomal subunit protein bL21.